The chain runs to 322 residues: ATP-dependent 6-phosphofructokinase (322 aa).

ATP is bound at residue G11. 21 to 25 (RAVVR) provides a ligand contact to ADP. ATP-binding positions include 72 to 73 (RC) and 102 to 105 (GDGS). D103 is a binding site for Mg(2+). 127–129 (TID) lines the substrate pocket. The active-site Proton acceptor is the D129. R156 contacts ADP. Residues R164 and 171–173 (MGR) contribute to the substrate site. ADP contacts are provided by residues 187-189 (GAE), R213, and 215-217 (KKH). Substrate is bound by residues E224, R245, and 251 to 254 (HIQR).

The protein belongs to the phosphofructokinase type A (PFKA) family. ATP-dependent PFK group I subfamily. Prokaryotic clade 'B1' sub-subfamily. As to quaternary structure, homotetramer. Mg(2+) is required as a cofactor.

Its subcellular location is the cytoplasm. The enzyme catalyses beta-D-fructose 6-phosphate + ATP = beta-D-fructose 1,6-bisphosphate + ADP + H(+). It functions in the pathway carbohydrate degradation; glycolysis; D-glyceraldehyde 3-phosphate and glycerone phosphate from D-glucose: step 3/4. With respect to regulation, allosterically activated by ADP and other diphosphonucleosides, and allosterically inhibited by phosphoenolpyruvate. In terms of biological role, catalyzes the phosphorylation of D-fructose 6-phosphate to fructose 1,6-bisphosphate by ATP, the first committing step of glycolysis. The chain is ATP-dependent 6-phosphofructokinase from Staphylococcus carnosus (strain TM300).